Here is a 637-residue protein sequence, read N- to C-terminus: Threonine--tRNA ligase (637 aa).

One can recognise a TGS domain in the interval 1–61 (MIKITLKDGK…NEDSTLEILT (61 aa)). The catalytic stretch occupies residues 242–532 (DHRKLGKELG…LTEHYAGAFP (291 aa)). Cys-333, His-384, and His-509 together coordinate Zn(2+).

The protein belongs to the class-II aminoacyl-tRNA synthetase family. As to quaternary structure, homodimer. Zn(2+) is required as a cofactor.

Its subcellular location is the cytoplasm. The enzyme catalyses tRNA(Thr) + L-threonine + ATP = L-threonyl-tRNA(Thr) + AMP + diphosphate + H(+). Catalyzes the attachment of threonine to tRNA(Thr) in a two-step reaction: L-threonine is first activated by ATP to form Thr-AMP and then transferred to the acceptor end of tRNA(Thr). Also edits incorrectly charged L-seryl-tRNA(Thr). This Clostridium novyi (strain NT) protein is Threonine--tRNA ligase.